The chain runs to 241 residues: Tetrahydromethanopterin S-methyltransferase subunit A (241 aa).

Residues methionine 1 to glycine 220 are Cytoplasmic-facing. Position 85 (histidine 85) interacts with 5-hydroxybenzimidazolylcob(I)amide. The chain crosses the membrane as a helical span at residues lysine 221–phenylalanine 241.

This sequence belongs to the MtrA family. In terms of assembly, the complex is composed of 8 subunits; MtrA, MtrB, MtrC, MtrD, MtrE, MtrF, MtrG and MtrH. Requires 5-hydroxybenzimidazolylcob(I)amide as cofactor.

It is found in the cell membrane. The catalysed reaction is 5-methyl-5,6,7,8-tetrahydromethanopterin + coenzyme M + 2 Na(+)(in) = 5,6,7,8-tetrahydromethanopterin + methyl-coenzyme M + 2 Na(+)(out). It functions in the pathway one-carbon metabolism; methanogenesis from CO(2); methyl-coenzyme M from 5,10-methylene-5,6,7,8-tetrahydromethanopterin: step 2/2. Its function is as follows. Part of a complex that catalyzes the formation of methyl-coenzyme M and tetrahydromethanopterin from coenzyme M and methyl-tetrahydromethanopterin. This is an energy-conserving, sodium-ion translocating step. The polypeptide is Tetrahydromethanopterin S-methyltransferase subunit A (Methanocaldococcus jannaschii (strain ATCC 43067 / DSM 2661 / JAL-1 / JCM 10045 / NBRC 100440) (Methanococcus jannaschii)).